The following is a 480-amino-acid chain: Sestrin-2 (480 aa).

The residue at position 1 (Met-1) is an N-acetylmethionine. Positions 20-45 (PGGVGDSGPGEEQRESRARRGPRGPS) are disordered. The interval 66–239 (GLEALMSSGR…APTPPSEQSS (174 aa)) is N-terminal domain; mediates the alkylhydroperoxide reductase activity. The active-site Cysteine sulfenic acid (-SOH) intermediate is Cys-125. Lys-175 is covalently cross-linked (Glycyl lysine isopeptide (Lys-Gly) (interchain with G-Cter in ubiquitin)). 2 disordered regions span residues 222–252 (ADGS…SGGF) and 272–291 (LLRD…ELEK). Residue Ser-249 is modified to Phosphoserine. A C-terminal domain; mediates TORC1 regulation region spans residues 308-480 (PHPDMLCFVE…ALRAITRYMT (173 aa)). Residues 374–377 (TYNT), Thr-386, and Glu-451 contribute to the L-leucine site.

Belongs to the sestrin family. In terms of assembly, interacts with the GATOR2 complex which is composed of MIOS, SEC13, SEH1L, WDR24 and WDR59; the interaction is negatively regulated by leucine. Conveys leucine availability via direct interaction with SEH1L and WDR24 components of the GATOR2 complex. Interacts with RRAGA, RRAGB, RRAGC and RRAGD; may function as a guanine nucleotide dissociation inhibitor for RRAGs and regulate them. May interact with the TORC2 complex. Interacts with KEAP1, RBX1, SQSTM and ULK1; to regulate the degradation of KEAP1. May also associate with the complex composed of TSC1, TSC2 and the AMP-responsive protein kinase/AMPK to regulate TORC1 signaling. May interact with PRDX1. Post-translationally, phosphorylated by ULK1 at multiple sites. In terms of processing, ubiquitinated at Lys-175 by RNF167 via 'Lys-63'-linked polyubiquitination in response to leucine deprivation: ubiquitination promotes SESN2-interaction with the GATOR2 complex, leading to inhibit the TORC1 signaling pathway. Deubiquitinated at Lys-175 by STAMBPL1, promoting the TORC1 signaling pathway. Ubiquitinated by RNF186; ubiquitination mediates proteasomal degradation. In terms of tissue distribution, widely expressed.

The protein resides in the cytoplasm. It carries out the reaction a hydroperoxide + L-cysteinyl-[protein] = S-hydroxy-L-cysteinyl-[protein] + an alcohol. Its function is as follows. Functions as an intracellular leucine sensor that negatively regulates the mTORC1 signaling pathway through the GATOR complex. In absence of leucine, binds the GATOR subcomplex GATOR2 and prevents mTORC1 signaling. Binding of leucine to SESN2 disrupts its interaction with GATOR2 thereby activating the TORC1 signaling pathway. This stress-inducible metabolic regulator also plays a role in protection against oxidative and genotoxic stresses. May negatively regulate protein translation in response to endoplasmic reticulum stress, via mTORC1. May positively regulate the transcription by NFE2L2 of genes involved in the response to oxidative stress by facilitating the SQSTM1-mediated autophagic degradation of KEAP1. May also mediate TP53 inhibition of TORC1 signaling upon genotoxic stress. Moreover, may prevent the accumulation of reactive oxygen species (ROS) through the alkylhydroperoxide reductase activity born by the N-terminal domain of the protein. Was originally reported to contribute to oxidative stress resistance by reducing PRDX1. However, this could not be confirmed. This chain is Sestrin-2, found in Homo sapiens (Human).